The chain runs to 602 residues: Elongation factor 4 (602 aa).

The tr-type G domain maps to 2-184 (DHIRNFSIIA…AVIARMPPPK (183 aa)). GTP is bound by residues 14–19 (DHGKST) and 131–134 (NKMD).

The protein belongs to the TRAFAC class translation factor GTPase superfamily. Classic translation factor GTPase family. LepA subfamily.

It is found in the cell inner membrane. The enzyme catalyses GTP + H2O = GDP + phosphate + H(+). Functionally, required for accurate and efficient protein synthesis under certain stress conditions. May act as a fidelity factor of the translation reaction, by catalyzing a one-codon backward translocation of tRNAs on improperly translocated ribosomes. Back-translocation proceeds from a post-translocation (POST) complex to a pre-translocation (PRE) complex, thus giving elongation factor G a second chance to translocate the tRNAs correctly. Binds to ribosomes in a GTP-dependent manner. The sequence is that of Elongation factor 4 from Leptothrix cholodnii (strain ATCC 51168 / LMG 8142 / SP-6) (Leptothrix discophora (strain SP-6)).